Here is a 263-residue protein sequence, read N- to C-terminus: Acyl-[acyl-carrier-protein]--UDP-N-acetylglucosamine O-acyltransferase (263 aa).

Belongs to the transferase hexapeptide repeat family. LpxA subfamily. In terms of assembly, homotrimer.

It localises to the cytoplasm. The enzyme catalyses a (3R)-hydroxyacyl-[ACP] + UDP-N-acetyl-alpha-D-glucosamine = a UDP-3-O-[(3R)-3-hydroxyacyl]-N-acetyl-alpha-D-glucosamine + holo-[ACP]. It functions in the pathway glycolipid biosynthesis; lipid IV(A) biosynthesis; lipid IV(A) from (3R)-3-hydroxytetradecanoyl-[acyl-carrier-protein] and UDP-N-acetyl-alpha-D-glucosamine: step 1/6. Its function is as follows. Involved in the biosynthesis of lipid A, a phosphorylated glycolipid that anchors the lipopolysaccharide to the outer membrane of the cell. This is Acyl-[acyl-carrier-protein]--UDP-N-acetylglucosamine O-acyltransferase from Campylobacter jejuni subsp. doylei (strain ATCC BAA-1458 / RM4099 / 269.97).